Consider the following 392-residue polypeptide: GTPase Obg (392 aa).

Residues 1 to 159 (MKFIDEALIR…RDLQLELMLL (159 aa)) enclose the Obg domain. Residues 160 to 333 (ADVGMLGLPN…LCRDIMDFIE (174 aa)) form the OBG-type G domain. Residues 166-173 (GLPNAGKS), 191-195 (FTTLV), 213-216 (DIPG), 283-286 (NKID), and 314-316 (SAA) each bind GTP. Residues Ser173 and Thr193 each contribute to the Mg(2+) site. The disordered stretch occupies residues 361–392 (SEQVFTEDDQEEDDWDDWSEDDEEGVEIIYKP). Residues 365 to 386 (FTEDDQEEDDWDDWSEDDEEGV) are compositionally biased toward acidic residues.

Belongs to the TRAFAC class OBG-HflX-like GTPase superfamily. OBG GTPase family. As to quaternary structure, monomer. Mg(2+) is required as a cofactor.

Its subcellular location is the cytoplasm. Functionally, an essential GTPase which binds GTP, GDP and possibly (p)ppGpp with moderate affinity, with high nucleotide exchange rates and a fairly low GTP hydrolysis rate. Plays a role in control of the cell cycle, stress response, ribosome biogenesis and in those bacteria that undergo differentiation, in morphogenesis control. The chain is GTPase Obg from Histophilus somni (strain 2336) (Haemophilus somnus).